The sequence spans 237 residues: Phosphoribosylaminoimidazole-succinocarboxamide synthase (237 aa).

Belongs to the SAICAR synthetase family.

The catalysed reaction is 5-amino-1-(5-phospho-D-ribosyl)imidazole-4-carboxylate + L-aspartate + ATP = (2S)-2-[5-amino-1-(5-phospho-beta-D-ribosyl)imidazole-4-carboxamido]succinate + ADP + phosphate + 2 H(+). It participates in purine metabolism; IMP biosynthesis via de novo pathway; 5-amino-1-(5-phospho-D-ribosyl)imidazole-4-carboxamide from 5-amino-1-(5-phospho-D-ribosyl)imidazole-4-carboxylate: step 1/2. This Salmonella agona (strain SL483) protein is Phosphoribosylaminoimidazole-succinocarboxamide synthase.